Reading from the N-terminus, the 244-residue chain is MQAINPNWNVPKNIHAFTTTREGGVSLAPYLSFNLGDHVGDNKSAVKTNRTLLVEKFGLPQTPIFLTQTHSTRVIQLPYSGQNLEADAVYTNVPNQVCVVMTADCLPVLFTTTSGNEVAATHAGWRGLCDGVLEETVKYFQAKPEDIIAWFGPAIGPKAFQVGIDVVEKFVVVDEKAKLAFQPDAIEEGKYLSNLYQIATQRLNNLGITQIYGGNHCTFNEKEKFFSYRRDNQTGRMASVIWFE.

Positions 70, 105, and 122 each coordinate Zn(2+).

Belongs to the purine nucleoside phosphorylase YfiH/LACC1 family. Homodimer. It depends on Cu(2+) as a cofactor. Zn(2+) serves as cofactor.

The catalysed reaction is adenosine + phosphate = alpha-D-ribose 1-phosphate + adenine. It carries out the reaction S-methyl-5'-thioadenosine + phosphate = 5-(methylsulfanyl)-alpha-D-ribose 1-phosphate + adenine. The enzyme catalyses inosine + phosphate = alpha-D-ribose 1-phosphate + hypoxanthine. It catalyses the reaction adenosine + H2O + H(+) = inosine + NH4(+). Functionally, purine nucleoside enzyme that catalyzes the phosphorolysis of adenosine and inosine nucleosides, yielding D-ribose 1-phosphate and the respective free bases, adenine and hypoxanthine. Also catalyzes the phosphorolysis of S-methyl-5'-thioadenosine into adenine and S-methyl-5-thio-alpha-D-ribose 1-phosphate. Also has adenosine deaminase activity. This Haemophilus influenzae (strain ATCC 51907 / DSM 11121 / KW20 / Rd) protein is Purine nucleoside phosphorylase HI_0175.